Here is a 149-residue protein sequence, read N- to C-terminus: Azurin (149 aa).

A signal peptide spans M1–A20. Positions A21–N149 constitute a Plastocyanin-like domain. A disulfide bridge links C23 with C46. Cu cation is bound by residues H66, C132, H137, and M141.

Its subcellular location is the periplasm. Its function is as follows. Transfers electrons from cytochrome c551 to cytochrome oxidase. The chain is Azurin (azu) from Achromobacter denitrificans (Alcaligenes denitrificans).